We begin with the raw amino-acid sequence, 327 residues long: 2-methoxy-6-polyprenyl-1,4-benzoquinol methylase, mitochondrial (327 aa).

The transit peptide at 1–43 (MAAPIRAFVLRVLSDSTRNIHHVLRCRSKYLCRRAAITARRGY) directs the protein to the mitochondrion. S-adenosyl-L-methionine-binding positions include threonine 117, aspartate 171, and 199–200 (DA).

This sequence belongs to the class I-like SAM-binding methyltransferase superfamily. MenG/UbiE family. In terms of assembly, component of a multi-subunit COQ enzyme complex, composed of at least coq3, coq4, coq5, coq6, coq7 and coq9.

The protein localises to the mitochondrion inner membrane. It catalyses the reaction a 2-methoxy-6-(all-trans-polyprenyl)benzene-1,4-diol + S-adenosyl-L-methionine = a 5-methoxy-2-methyl-3-(all-trans-polyprenyl)benzene-1,4-diol + S-adenosyl-L-homocysteine + H(+). The protein operates within cofactor biosynthesis; ubiquinone biosynthesis. Methyltransferase required for the conversion of 2-polyprenyl-6-methoxy-1,4-benzoquinol (DDMQH2) to 2-polyprenyl-3-methyl-6-methoxy-1,4-benzoquinol (DMQH2). The polypeptide is 2-methoxy-6-polyprenyl-1,4-benzoquinol methylase, mitochondrial (Danio rerio (Zebrafish)).